The sequence spans 683 residues: 1,4-alpha-glucan-branching enzyme (683 aa).

2 residues coordinate (1,4-alpha-D-glucosyl)n: Trp-92 and Lys-127. The active-site Nucleophile is Asp-342. Glu-397 functions as the Proton donor in the catalytic mechanism.

It belongs to the glycosyl hydrolase 13 family. GlgB subfamily.

The protein localises to the cytoplasm. The enzyme catalyses Transfers a segment of a (1-&gt;4)-alpha-D-glucan chain to a primary hydroxy group in a similar glucan chain.. It participates in glycan biosynthesis; glycogen biosynthesis. Its function is as follows. Glycogen-branching enzyme participates in the glycogen biosynthetic process along with glycogenin and glycogen synthase. Generates alpha-1,6-glucosidic branches from alpha-1,4-linked glucose chains, to increase solubility of the glycogen polymer. In Rhizophagus irregularis (strain DAOM 181602 / DAOM 197198 / MUCL 43194) (Arbuscular mycorrhizal fungus), this protein is 1,4-alpha-glucan-branching enzyme (GLC3).